The chain runs to 543 residues: Cyclohexanone 1,2-monooxygenase (543 aa).

Positions 16, 37, 46, 57, 63, and 110 each coordinate FAD.

The protein belongs to the FAD-binding monooxygenase family. FAD is required as a cofactor.

The catalysed reaction is cyclohexanone + NADPH + O2 + H(+) = hexano-6-lactone + NADP(+) + H2O. This chain is Cyclohexanone 1,2-monooxygenase, found in Acinetobacter sp.